The sequence spans 120 residues: Small ribosomal subunit protein uS13 (120 aa).

Positions 96–120 are disordered; it reads PCRGQRTRTNARTRKGPRKAIAGKK.

This sequence belongs to the universal ribosomal protein uS13 family. As to quaternary structure, part of the 30S ribosomal subunit. Forms a loose heterodimer with protein S19. Forms two bridges to the 50S subunit in the 70S ribosome.

Functionally, located at the top of the head of the 30S subunit, it contacts several helices of the 16S rRNA. In the 70S ribosome it contacts the 23S rRNA (bridge B1a) and protein L5 of the 50S subunit (bridge B1b), connecting the 2 subunits; these bridges are implicated in subunit movement. Contacts the tRNAs in the A and P-sites. This Chromobacterium violaceum (strain ATCC 12472 / DSM 30191 / JCM 1249 / CCUG 213 / NBRC 12614 / NCIMB 9131 / NCTC 9757 / MK) protein is Small ribosomal subunit protein uS13.